The primary structure comprises 472 residues: Coronin-6 (472 aa).

WD repeat units lie at residues 79 to 119, 129 to 169, 173 to 212, 216 to 259, and 264 to 304; these read GHTG…PVRN, GHSK…VLLS, IHPD…VVAE, AHEG…EPVA, and DTSN…PFVH. The disordered stretch occupies residues 409 to 434; that stretch reads NILDVRPPASPRRSQSASEAPLSQQH. The span at 419-429 shows a compositional bias: low complexity; that stretch reads PRRSQSASEAP. Residues 430 to 469 are a coiled coil; it reads LSQQHTLETLLEEMKALRERVQAQEERITALENMLCELVD.

The polypeptide is Coronin-6 (Coro6) (Rattus norvegicus (Rat)).